A 400-amino-acid chain; its full sequence is Queuine tRNA-ribosyltransferase catalytic subunit (400 aa).

Aspartate 89 serves as the catalytic Proton acceptor. Substrate is bound by residues 89–93 (DSGGF), aspartate 143, glutamine 185, and glycine 212. The segment at 243-249 (GVGFPVD) is RNA binding. Catalysis depends on aspartate 262, which acts as the Nucleophile. The segment at 267-271 (TRTAR) is RNA binding; important for wobble base 34 recognition. Residues cysteine 301, cysteine 303, cysteine 306, and histidine 331 each coordinate Zn(2+).

This sequence belongs to the queuine tRNA-ribosyltransferase family. As to quaternary structure, heterodimer of a catalytic subunit and an accessory subunit. Requires Zn(2+) as cofactor.

It is found in the cytoplasm. It carries out the reaction guanosine(34) in tRNA + queuine = queuosine(34) in tRNA + guanine. Functionally, catalytic subunit of the queuine tRNA-ribosyltransferase (TGT) that catalyzes the base-exchange of a guanine (G) residue with queuine (Q) at position 34 (anticodon wobble position) in tRNAs with GU(N) anticodons (tRNA-Asp, -Asn, -His and -Tyr), resulting in the hypermodified nucleoside queuosine (7-(((4,5-cis-dihydroxy-2-cyclopenten-1-yl)amino)methyl)-7-deazaguanosine). Catalysis occurs through a double-displacement mechanism. The nucleophile active site attacks the C1' of nucleotide 34 to detach the guanine base from the RNA, forming a covalent enzyme-RNA intermediate. The proton acceptor active site deprotonates the incoming queuine, allowing a nucleophilic attack on the C1' of the ribose to form the product. This chain is Queuine tRNA-ribosyltransferase catalytic subunit, found in Caenorhabditis briggsae.